A 506-amino-acid chain; its full sequence is Maturase K (506 aa).

The protein belongs to the intron maturase 2 family. MatK subfamily.

The protein localises to the plastid. It localises to the chloroplast. Usually encoded in the trnK tRNA gene intron. Probably assists in splicing its own and other chloroplast group II introns. The chain is Maturase K from Empetrum nigrum (Black crowberry).